We begin with the raw amino-acid sequence, 546 residues long: Chaperonin GroEL (546 aa).

ATP is bound by residues 30–33 (TLGP), Lys51, 87–91 (DGTTT), Gly415, and Asp495.

Belongs to the chaperonin (HSP60) family. Forms a cylinder of 14 subunits composed of two heptameric rings stacked back-to-back. Interacts with the co-chaperonin GroES.

The protein localises to the cytoplasm. It carries out the reaction ATP + H2O + a folded polypeptide = ADP + phosphate + an unfolded polypeptide.. In terms of biological role, together with its co-chaperonin GroES, plays an essential role in assisting protein folding. The GroEL-GroES system forms a nano-cage that allows encapsulation of the non-native substrate proteins and provides a physical environment optimized to promote and accelerate protein folding. In Alteromonas mediterranea (strain DSM 17117 / CIP 110805 / LMG 28347 / Deep ecotype), this protein is Chaperonin GroEL.